The primary structure comprises 652 residues: MKTRISELVSVLNQYAKEYYQLDQPSVSDAEYDTLYRELVELETAHPELILPDSPTHRVGGKMLDGFEKYSHVYPLFSLQDAFSREELEAFDQRVRKEFPQATYICELKIDGLSISLTYEAGNLVVGATRGDGSVGENITENLKRVADVPLTLPEAVDITVRGECYMPKASFDRVNKQRQEAGEAEFVNPRNAAAGTLRQLDTGVVAQRGLATFLYQEASPSEATSQSQVLEKLDALGFVTNHEYCLAESIDDTWDFIEKIAERRDDLPYEIDGVVIKVNDLAIQEELGFTVKAPRWAVAYKFPAEEKEAEILSVDWTVGRTGVVTPTANLSPVQLAGTTVSRATLHNVDYIAEKDIRIGDTVIVYKAGDIIPAVLKVVDKYRKEQEIMPIPSHCPSCQSDLQHYEDEVALRCINPICPSQLMSKLEHFASRDAMNIAGLGSSIVEKLFGAGLVHDVADIYKLTVDDLLTLEGFKEKSANKLYQAIQTSKSNSAECLLFGLGIRHVGSKASKILVEKFGDLETLAFADQEAIASLEGLGQVIAKSLTTFFASEGAQQLLAELKEAKVNLTYLGQVVDENAALSGMTVVLTGKLERMKRNEAKAKLEALGANVAGSVSKKTNLVVAGTDAGSKLTKAQELGIEIKDEAWLESL.

Residues 29–33 (DAEYD), 78–79 (SL), and Glu107 contribute to the NAD(+) site. The active-site N6-AMP-lysine intermediate is Lys109. Residues Arg130, Glu164, Lys278, and Lys302 each coordinate NAD(+). Zn(2+) is bound by residues Cys395, Cys398, Cys413, and Cys418. Residues 577-652 (DENAALSGMT…IKDEAWLESL (76 aa)) form the BRCT domain.

Belongs to the NAD-dependent DNA ligase family. LigA subfamily. Mg(2+) is required as a cofactor. Requires Mn(2+) as cofactor.

It catalyses the reaction NAD(+) + (deoxyribonucleotide)n-3'-hydroxyl + 5'-phospho-(deoxyribonucleotide)m = (deoxyribonucleotide)n+m + AMP + beta-nicotinamide D-nucleotide.. DNA ligase that catalyzes the formation of phosphodiester linkages between 5'-phosphoryl and 3'-hydroxyl groups in double-stranded DNA using NAD as a coenzyme and as the energy source for the reaction. It is essential for DNA replication and repair of damaged DNA. This is DNA ligase from Streptococcus suis (strain 98HAH33).